The following is a 210-amino-acid chain: Mating-type-like protein ALPHA2, silenced copy at MTL3 (210 aa).

A DNA-binding region (homeobox; TALE-type) is located at residues 108–170 (ASYRGHRFTR…NRRRKQKSIY (63 aa)).

The protein belongs to the TALE/M-ATYP homeobox family.

It is found in the nucleus. Its function is as follows. Mating type proteins are sequence specific DNA-binding proteins that act as master switches in yeast differentiation by controlling gene expression in a cell type-specific fashion. The sequence is that of Mating-type-like protein ALPHA2, silenced copy at MTL3 (MTL3alpha2) from Candida glabrata (strain ATCC 2001 / BCRC 20586 / JCM 3761 / NBRC 0622 / NRRL Y-65 / CBS 138) (Yeast).